Consider the following 457-residue polypeptide: Mannose-6-phosphate isomerase (457 aa).

Zn(2+)-binding residues include Gln-108, His-110, Glu-135, and His-292. Arg-311 is an active-site residue.

The protein belongs to the mannose-6-phosphate isomerase type 1 family. It depends on Zn(2+) as a cofactor.

The protein localises to the cytoplasm. It catalyses the reaction D-mannose 6-phosphate = D-fructose 6-phosphate. It participates in nucleotide-sugar biosynthesis; GDP-alpha-D-mannose biosynthesis; alpha-D-mannose 1-phosphate from D-fructose 6-phosphate: step 1/2. In terms of biological role, involved in the synthesis of the GDP-mannose and dolichol-phosphate-mannose required for a number of critical mannosyl transfer reactions. In Aspergillus fumigatus (strain ATCC MYA-4609 / CBS 101355 / FGSC A1100 / Af293) (Neosartorya fumigata), this protein is Mannose-6-phosphate isomerase (pmi1).